The sequence spans 107 residues: U1-lycotoxin-Ls1c (107 aa).

The N-terminal stretch at 1-20 (MMKVLVVVALLVTLISYSSS) is a signal peptide. Residues 21 to 41 (EGIDDLEADELLSLMANEQTR) constitute a propeptide that is removed on maturation. 4 disulfide bridges follow: cysteine 44-cysteine 59, cysteine 51-cysteine 68, cysteine 58-cysteine 86, and cysteine 70-cysteine 84.

This sequence belongs to the neurotoxin 19 (CSTX) family. 04 (U1-Lctx) subfamily. Expressed by the venom gland.

The protein localises to the secreted. This chain is U1-lycotoxin-Ls1c, found in Lycosa singoriensis (Wolf spider).